A 444-amino-acid chain; its full sequence is Transcription activator AKTR-3 (444 aa).

Positions 16–43 (CDFCTQSKLRCNKNKPSCRRCTIQQQPC) form a DNA-binding region, zn(2)-C6 fungal-type. The disordered stretch occupies residues 49–89 (RRTGRPPKHPRTANDCQEANGQHGEQDPVTSTPGGSCQQQS). Residues 50–59 (RTGRPPKHPR) are compositionally biased toward basic residues. The span at 76 to 89 (PVTSTPGGSCQQQS) shows a compositional bias: polar residues.

Its subcellular location is the nucleus. Functionally, transcription factor that regulates the expression of the gene clusters that mediate the biosynthesis of the host-selective toxins (HSTs) AK-toxins responsible for Japanese pear black spot disease by the Japanese pear pathotype. AK-toxins are esters of 9,10-epoxy 8-hydroxy 9-methyldecatrienoic acid (EDA). On cellular level, AK-toxins affect plasma membrane of susceptible cells and cause a sudden increase in loss of K(+) after a few minutes of toxin treatment. In Alternaria alternata (Alternaria rot fungus), this protein is Transcription activator AKTR-3.